The following is a 920-amino-acid chain: Periplasmic nitrate reductase (920 aa).

The segment at residues 1–29 (MNRRDFIKSTAAAAACASAGIALPANLNA) is a signal peptide (tat-type signal). A 4Fe-4S Mo/W bis-MGD-type domain is found at 35–91 (WRWDKAVCRFCGTGCGIMVATKNGKIVAVKGDPEAPVNRGLNCIKGYFNAKIMYGDD). [4Fe-4S] cluster-binding residues include cysteine 42, cysteine 45, cysteine 49, and cysteine 77. Residues lysine 79, glutamine 147, asparagine 172, cysteine 176, 209-216 (WGANMAEM), methionine 416, glutamine 420, asparagine 526, 551-552 (SD), lysine 574, aspartate 601, and 810-819 (TGRVLEHWHS) each bind Mo-bis(molybdopterin guanine dinucleotide). Residue tryptophan 886 participates in substrate binding. Residues asparagine 894 and lysine 911 each coordinate Mo-bis(molybdopterin guanine dinucleotide).

This sequence belongs to the prokaryotic molybdopterin-containing oxidoreductase family. NasA/NapA/NarB subfamily. As to quaternary structure, component of the periplasmic nitrate reductase NapAB complex composed of NapA and NapB. [4Fe-4S] cluster is required as a cofactor. Mo-bis(molybdopterin guanine dinucleotide) serves as cofactor. Predicted to be exported by the Tat system. The position of the signal peptide cleavage has not been experimentally proven.

It is found in the periplasm. It catalyses the reaction 2 Fe(II)-[cytochrome] + nitrate + 2 H(+) = 2 Fe(III)-[cytochrome] + nitrite + H2O. Its function is as follows. Catalytic subunit of the periplasmic nitrate reductase complex NapAB. Receives electrons from NapB and catalyzes the reduction of nitrate to nitrite. The protein is Periplasmic nitrate reductase of Campylobacter hominis (strain ATCC BAA-381 / DSM 21671 / CCUG 45161 / LMG 19568 / NCTC 13146 / CH001A).